Reading from the N-terminus, the 224-residue chain is Protein YiiM (224 aa).

In terms of domain architecture, MOSC spans Ile-26–Val-163.

In terms of assembly, monomer.

The polypeptide is Protein YiiM (yiiM) (Escherichia coli (strain K12)).